The chain runs to 316 residues: Pantothenate kinase (316 aa).

95–102 (GSVAVGKS) lines the ATP pocket.

Belongs to the prokaryotic pantothenate kinase family.

Its subcellular location is the cytoplasm. It catalyses the reaction (R)-pantothenate + ATP = (R)-4'-phosphopantothenate + ADP + H(+). It participates in cofactor biosynthesis; coenzyme A biosynthesis; CoA from (R)-pantothenate: step 1/5. This chain is Pantothenate kinase, found in Salmonella choleraesuis (strain SC-B67).